The following is a 214-amino-acid chain: NADH-quinone oxidoreductase subunit C (214 aa).

The protein belongs to the complex I 30 kDa subunit family. NDH-1 is composed of 14 different subunits. Subunits NuoB, C, D, E, F, and G constitute the peripheral sector of the complex.

The protein resides in the cell inner membrane. The enzyme catalyses a quinone + NADH + 5 H(+)(in) = a quinol + NAD(+) + 4 H(+)(out). NDH-1 shuttles electrons from NADH, via FMN and iron-sulfur (Fe-S) centers, to quinones in the respiratory chain. The immediate electron acceptor for the enzyme in this species is believed to be ubiquinone. Couples the redox reaction to proton translocation (for every two electrons transferred, four hydrogen ions are translocated across the cytoplasmic membrane), and thus conserves the redox energy in a proton gradient. In Francisella tularensis subsp. holarctica (strain LVS), this protein is NADH-quinone oxidoreductase subunit C.